Reading from the N-terminus, the 815-residue chain is cGMP-specific 3',5'-cyclic phosphodiesterase delta (815 aa).

Topologically, residues 1–56 (MNEYNNDNMEQEKEKKKEEQKYKNIIKKEYFIFPRLYDKNKEIEYNKLRIHNIKEY) are cytoplasmic. Residues 57 to 77 (ICIHLTISLFIILIECFVFSF) form a helical membrane-spanning segment. At 78-86 (NLNIKDTTY) the chain is on the extracellular side. A helical transmembrane segment spans residues 87 to 107 (VEICVVIFSILNCLMHIVVLI). Over 108 to 120 (KMYFFTSESVYTK) the chain is Cytoplasmic. A helical transmembrane segment spans residues 121–141 (GVFIGYIVLNQVFQFLSLYFF). At 142-160 (TKRNEQSKNDIAHLKYYDN) the chain is on the extracellular side. Residues 161–181 (SFNLYVHFFVDSVFILCLPAL) traverse the membrane as a helical segment. Residues 182–183 (SF) lie on the Cytoplasmic side of the membrane. Residues 184 to 204 (FLSVLFMMMFLCLNILLINMI) form a helical membrane-spanning segment. Residues 205–210 (KFNKTN) lie on the Extracellular side of the membrane. N-linked (GlcNAc...) asparagine glycosylation occurs at Asn-207. A helical membrane pass occupies residues 211-231 (YGSDIYHICLLSVVLLMFLIL). Residues 232–815 (RYMMEERNRL…FKEEIKHGKL (584 aa)) lie on the Cytoplasmic side of the membrane. Positions 384–762 (YEVEVLKNIK…QTWRLIEKNI (379 aa)) constitute a PDEase domain. His-459 (proton donor) is an active-site residue. 459–463 (HNANH) serves as a coordination point for 3',5'-cyclic GMP. Positions 463, 499, 500, and 616 each coordinate a divalent metal cation. 3',5'-cyclic GMP contacts are provided by Asp-500, Asp-616, and Gln-715.

This sequence belongs to the cyclic nucleotide phosphodiesterase family. Requires a divalent metal cation as cofactor.

It localises to the membrane. It carries out the reaction 3',5'-cyclic GMP + H2O = GMP + H(+). Its pathway is purine metabolism; 3',5'-cyclic GMP degradation; GMP from 3',5'-cyclic GMP: step 1/1. Functionally, specifically hydrolyzes the second messenger cGMP, which is a key regulator of many important physiological processes. Probably by regulating cGMP levels, required for activation of gametogenesis. This chain is cGMP-specific 3',5'-cyclic phosphodiesterase delta, found in Plasmodium falciparum (isolate 3D7).